A 260-amino-acid chain; its full sequence is Ras-related protein Rab-32B (260 aa).

Positions 11-50 (FDTDPDVSTDSNYNNNNNSNNNNSIISNSNNNNNNNNNNV) are disordered. Residues 21–49 (SNYNNNNNSNNNNSIISNSNNNNNNNNNN) show a composition bias toward low complexity. A GTP-binding site is contributed by 66–73 (GDYAVGKS). The short motif at 88 to 96 (YKLTIGVDF) is the Effector region element. Residues 115–119 (DIAGH) and 177–180 (NKSD) contribute to the GTP site. The interval 231-260 (TNHPPKPEEDTLELTKTNGEKSDDSKSCCK) is disordered. Positions 248–260 (NGEKSDDSKSCCK) are enriched in basic and acidic residues. 2 S-geranylgeranyl cysteine lipidation sites follow: C258 and C259.

Belongs to the small GTPase superfamily. Rab family.

This chain is Ras-related protein Rab-32B (rab32B), found in Dictyostelium discoideum (Social amoeba).